The primary structure comprises 245 residues: NAD-dependent protein deacetylase (245 aa).

Residues 1–245 enclose the Deacetylase sirtuin-type domain; sequence MIFVQQFEEV…EFVEGLSSIK (245 aa). The NAD(+) site is built by Ala26, Thr30, Phe37, Arg38, Gln105, Ile107, Asp108, and His123. Phe37 contributes to the nicotinamide binding site. 2 residues coordinate nicotinamide: Ile107 and Asp108. The active-site Proton acceptor is the His123. Zn(2+) contacts are provided by Cys131, Cys134, Cys151, and Cys154. Residues Thr190, Ser191, Asn216, and Ile234 each contribute to the NAD(+) site.

It belongs to the sirtuin family. Class U subfamily. It depends on Zn(2+) as a cofactor.

The protein resides in the cytoplasm. The catalysed reaction is N(6)-acetyl-L-lysyl-[protein] + NAD(+) + H2O = 2''-O-acetyl-ADP-D-ribose + nicotinamide + L-lysyl-[protein]. In terms of biological role, NAD-dependent protein deacetylase which modulates the activities of several enzymes which are inactive in their acetylated form. The chain is NAD-dependent protein deacetylase from Bacillus thuringiensis subsp. konkukian (strain 97-27).